Here is a 446-residue protein sequence, read N- to C-terminus: Glycine--tRNA ligase (446 aa).

Substrate is bound by residues R100 and E158. ATP-binding positions include 190–192 (RNE), 200–205 (FRTREF), 275–276 (EL), and 319–322 (GIER). Residue 205–209 (FEQFE) participates in substrate binding. Residue 315–319 (EPAVG) participates in substrate binding.

Belongs to the class-II aminoacyl-tRNA synthetase family. Homodimer.

The protein localises to the cytoplasm. The enzyme catalyses tRNA(Gly) + glycine + ATP = glycyl-tRNA(Gly) + AMP + diphosphate. Its function is as follows. Catalyzes the attachment of glycine to tRNA(Gly). The sequence is that of Glycine--tRNA ligase from Mycoplasma genitalium (strain ATCC 33530 / DSM 19775 / NCTC 10195 / G37) (Mycoplasmoides genitalium).